A 351-amino-acid chain; its full sequence is Glycerol-3-phosphate dehydrogenase 1-like protein (351 aa).

Gly-11–Gly-16 lines the NAD(+) pocket. Residue Lys-121 coordinates substrate. Ala-154 is a binding site for NAD(+). The active-site Proton acceptor is the Lys-205. Residues Arg-271, Lys-298, and Gln-300 each coordinate NAD(+). Arg-271–Asn-272 serves as a coordination point for substrate.

Belongs to the NAD-dependent glycerol-3-phosphate dehydrogenase family.

Its subcellular location is the cytoplasm. The enzyme catalyses sn-glycerol 3-phosphate + NAD(+) = dihydroxyacetone phosphate + NADH + H(+). In terms of biological role, plays a role in regulating cardiac sodium current. This chain is Glycerol-3-phosphate dehydrogenase 1-like protein (gpd1l), found in Danio rerio (Zebrafish).